The chain runs to 708 residues: Polyribonucleotide nucleotidyltransferase (708 aa).

2 residues coordinate Mg(2+): Asp-487 and Asp-493. The 60-residue stretch at 554 to 613 (PRIHTMKISADKIKDVIGKGGAVIRALTEETGTTIEIEDDGTIKIAATEGAAAKEAIRRI) folds into the KH domain. The S1 motif domain maps to 623–691 (GVIYTGKVAR…RQGRVRLSMK (69 aa)).

The protein belongs to the polyribonucleotide nucleotidyltransferase family. In terms of assembly, component of the RNA degradosome, which is a multiprotein complex involved in RNA processing and mRNA degradation. Requires Mg(2+) as cofactor.

The protein resides in the cytoplasm. The enzyme catalyses RNA(n+1) + phosphate = RNA(n) + a ribonucleoside 5'-diphosphate. Functionally, involved in mRNA degradation. Catalyzes the phosphorolysis of single-stranded polyribonucleotides processively in the 3'- to 5'-direction. The chain is Polyribonucleotide nucleotidyltransferase from Vibrio vulnificus (strain CMCP6).